The following is a 574-amino-acid chain: Glutamyl-tRNA(Gln) amidotransferase subunit B, mitochondrial (574 aa).

The transit peptide at 1-12 (MIRQFVSHRGIP) directs the protein to the mitochondrion. The interval 34 to 62 (PLGRKNWSTSDEAKSKRAAMRKGGAPPPE) is disordered.

Belongs to the GatB/GatE family. GatB subfamily. In terms of assembly, subunit of the heterotrimeric GatCAB amidotransferase (AdT) complex, composed of A, B and C subunits.

It localises to the mitochondrion. The catalysed reaction is L-glutamyl-tRNA(Gln) + L-glutamine + ATP + H2O = L-glutaminyl-tRNA(Gln) + L-glutamate + ADP + phosphate + H(+). Its function is as follows. Allows the formation of correctly charged Gln-tRNA(Gln) through the transamidation of misacylated Glu-tRNA(Gln) in the mitochondria. The reaction takes place in the presence of glutamine and ATP through an activated gamma-phospho-Glu-tRNA(Gln). The protein is Glutamyl-tRNA(Gln) amidotransferase subunit B, mitochondrial of Ajellomyces capsulatus (strain H143) (Darling's disease fungus).